The following is a 379-amino-acid chain: Cytochrome b (379 aa).

The next 4 membrane-spanning stretches (helical) occupy residues 33-53, 77-98, 113-133, and 178-198; these read FGSL…FLAM, WLIR…SIHA, WNIG…GYVL, and FFAF…VHLL. Positions 83 and 97 each coordinate heme b. The heme b site is built by His182 and His196. His201 is a binding site for a ubiquinone. The next 4 membrane-spanning stretches (helical) occupy residues 226-246, 288-308, 320-340, and 347-367; these read IKDL…ALFF, LGGV…PLLN, ITQT…WIGG, and FTMI…ILMP.

Belongs to the cytochrome b family. The cytochrome bc1 complex contains 11 subunits: 3 respiratory subunits (MT-CYB, CYC1 and UQCRFS1), 2 core proteins (UQCRC1 and UQCRC2) and 6 low-molecular weight proteins (UQCRH/QCR6, UQCRB/QCR7, UQCRQ/QCR8, UQCR10/QCR9, UQCR11/QCR10 and a cleavage product of UQCRFS1). This cytochrome bc1 complex then forms a dimer. Requires heme b as cofactor.

Its subcellular location is the mitochondrion inner membrane. Component of the ubiquinol-cytochrome c reductase complex (complex III or cytochrome b-c1 complex) that is part of the mitochondrial respiratory chain. The b-c1 complex mediates electron transfer from ubiquinol to cytochrome c. Contributes to the generation of a proton gradient across the mitochondrial membrane that is then used for ATP synthesis. The polypeptide is Cytochrome b (MT-CYB) (Thaptomys nigrita (Blackish grass mouse)).